The chain runs to 423 residues: Maltooligosaccharide ABC transporter solute-binding lipoprotein (423 aa).

Residues 1–24 form the signal peptide; it reads MSSKFMKSAAVLGTATLASLLLVA. Cysteine 25 carries N-palmitoyl cysteine lipidation. Cysteine 25 carries the S-diacylglycerol cysteine lipid modification. Residues tyrosine 52, aspartate 77, aspartate 83, 103–104, glutamate 148, aspartate 193, asparagine 196, 251–254, tryptophan 274, and lysine 307 each bind substrate; these read DR and EGAG.

This sequence belongs to the bacterial solute-binding protein 1 family.

It is found in the cell membrane. In terms of biological role, part of an ABC transporter complex involved in the uptake of maltodextrins. Binds glycogen-derived linear maltooligosaccharides increasing in size from maltotriose to maltooctaose with the highest affinity for maltotriose. Has a very weak affinity for maltose. Has also a very low affinity for maltotetraitol, indicating that the binding is selective for maltooligosaccharides with an intact reducing end. The chain is Maltooligosaccharide ABC transporter solute-binding lipoprotein from Streptococcus pneumoniae serotype 4 (strain ATCC BAA-334 / TIGR4).